Here is an 88-residue protein sequence, read N- to C-terminus: Elongation factor 1-beta (88 aa).

This sequence belongs to the EF-1-beta/EF-1-delta family.

In terms of biological role, promotes the exchange of GDP for GTP in EF-1-alpha/GDP, thus allowing the regeneration of EF-1-alpha/GTP that could then be used to form the ternary complex EF-1-alpha/GTP/AAtRNA. This is Elongation factor 1-beta (ef1b) from Thermoplasma volcanium (strain ATCC 51530 / DSM 4299 / JCM 9571 / NBRC 15438 / GSS1).